A 624-amino-acid polypeptide reads, in one-letter code: Kelch-like protein diablo (624 aa).

Residues 1–55 (MGDPLLPGSTGLGSGSATAATGGSVTAGSGLGNGGTGGAERPPSPARLTHTSEKH) are disordered. Over residues 15–28 (GSATAATGGSVTAG) the composition is skewed to low complexity. Residues 29 to 38 (SGLGNGGTGG) are compositionally biased toward gly residues. A BTB domain is found at 73 to 140 (CDVVLNVGGR…CYTAHIIVEE (68 aa)). Positions 175 to 277 (CLGIRAFADT…SPKFLVGTVG (103 aa)) constitute a BACK domain. Kelch repeat units lie at residues 324–370 (VLFA…VLND), 372–418 (LYAV…VLDG), 419–465 (FLYA…VLSG), 467–512 (LYAI…VFNN), 514–559 (IYAV…VVNG), and 560–606 (QLYA…VMRA).

It participates in protein modification; protein ubiquitination. Its function is as follows. Probable substrate-specific adapter of an E3 ubiquitin-protein ligase complex which mediates the ubiquitination and subsequent proteasomal degradation of target proteins. May have a role in synapse differentiation and growth. The polypeptide is Kelch-like protein diablo (Drosophila grimshawi (Hawaiian fruit fly)).